The sequence spans 205 residues: Pyridoxal 5'-phosphate synthase subunit PdxT (205 aa).

54–56 (GES) serves as a coordination point for L-glutamine. C86 serves as the catalytic Nucleophile. Residues R118 and 147–148 (IR) contribute to the L-glutamine site. Active-site charge relay system residues include H183 and E185.

This sequence belongs to the glutaminase PdxT/SNO family. In the presence of PdxS, forms a dodecamer of heterodimers. Only shows activity in the heterodimer.

It catalyses the reaction aldehydo-D-ribose 5-phosphate + D-glyceraldehyde 3-phosphate + L-glutamine = pyridoxal 5'-phosphate + L-glutamate + phosphate + 3 H2O + H(+). The catalysed reaction is L-glutamine + H2O = L-glutamate + NH4(+). Its pathway is cofactor biosynthesis; pyridoxal 5'-phosphate biosynthesis. Its function is as follows. Catalyzes the hydrolysis of glutamine to glutamate and ammonia as part of the biosynthesis of pyridoxal 5'-phosphate. The resulting ammonia molecule is channeled to the active site of PdxS. In Nitrosopumilus maritimus (strain SCM1), this protein is Pyridoxal 5'-phosphate synthase subunit PdxT.